The following is a 357-amino-acid chain: Chaperone protein DnaJ (357 aa).

The J domain occupies 4-69 (DYYAILGVDR…QKRKQYDETG (66 aa)). Residues 132–213 (GASKNVKYRR…CHGTGTVSKN (82 aa)) form a CR-type zinc finger. Residues cysteine 145, cysteine 148, cysteine 161, cysteine 164, cysteine 187, cysteine 190, cysteine 201, and cysteine 204 each coordinate Zn(2+). 4 CXXCXGXG motif repeats span residues 145–152 (CEHCSGTG), 161–168 (CPTCHGSG), 187–194 (CRTCHGRG), and 201–208 (CTVCHGTG).

It belongs to the DnaJ family. As to quaternary structure, homodimer. Requires Zn(2+) as cofactor.

It localises to the cytoplasm. Functionally, participates actively in the response to hyperosmotic and heat shock by preventing the aggregation of stress-denatured proteins and by disaggregating proteins, also in an autonomous, DnaK-independent fashion. Unfolded proteins bind initially to DnaJ; upon interaction with the DnaJ-bound protein, DnaK hydrolyzes its bound ATP, resulting in the formation of a stable complex. GrpE releases ADP from DnaK; ATP binding to DnaK triggers the release of the substrate protein, thus completing the reaction cycle. Several rounds of ATP-dependent interactions between DnaJ, DnaK and GrpE are required for fully efficient folding. Also involved, together with DnaK and GrpE, in the DNA replication of plasmids through activation of initiation proteins. This Picrophilus torridus (strain ATCC 700027 / DSM 9790 / JCM 10055 / NBRC 100828 / KAW 2/3) protein is Chaperone protein DnaJ.